The primary structure comprises 344 residues: Heat-inducible transcription repressor HrcA (344 aa).

Belongs to the HrcA family.

Functionally, negative regulator of class I heat shock genes (grpE-dnaK-dnaJ and groELS operons). Prevents heat-shock induction of these operons. This Streptococcus pneumoniae (strain 70585) protein is Heat-inducible transcription repressor HrcA.